Here is a 319-residue protein sequence, read N- to C-terminus: Acetyl esterase (319 aa).

The Involved in the stabilization of the negatively charged intermediate by the formation of the oxyanion hole motif lies at 91–93 (HGG). Catalysis depends on residues serine 165, aspartate 262, and histidine 292.

Belongs to the 'GDXG' lipolytic enzyme family. Homodimer. Interacts with MalT and MelA.

The protein localises to the cytoplasm. Functionally, displays esterase activity towards short chain fatty esters (acyl chain length of up to 8 carbons). Able to hydrolyze triacetylglycerol (triacetin) and tributyrylglycerol (tributyrin), but not trioleylglycerol (triolein) or cholesterol oleate. Negatively regulates MalT activity by antagonizing maltotriose binding. Inhibits MelA galactosidase activity. The polypeptide is Acetyl esterase (Shigella flexneri).